Reading from the N-terminus, the 73-residue chain is MKTLYLRNVPDDVVERLERLAELAKTSVSAVAVRELTEASRRADNPALLGDLPDIGIDTTELIGGIDAERAGR.

Functionally, antitoxin component of a possible type II toxin-antitoxin (TA) system. The cognate toxin is VapC9. This is Putative antitoxin VapB9 (vapB9) from Mycobacterium tuberculosis (strain CDC 1551 / Oshkosh).